The sequence spans 365 residues: tRNA-specific 2-thiouridylase MnmA (365 aa).

ATP is bound by residues 6 to 13 and leucine 32; that span reads AMSGGVDS. The Nucleophile role is filled by cysteine 101. Residues cysteine 101 and cysteine 199 are joined by a disulfide bond. Glycine 125 is an ATP binding site. The segment at 149–151 is interaction with tRNA; that stretch reads KDQ. The active-site Cysteine persulfide intermediate is cysteine 199.

This sequence belongs to the MnmA/TRMU family.

Its subcellular location is the cytoplasm. The enzyme catalyses S-sulfanyl-L-cysteinyl-[protein] + uridine(34) in tRNA + AH2 + ATP = 2-thiouridine(34) in tRNA + L-cysteinyl-[protein] + A + AMP + diphosphate + H(+). Its function is as follows. Catalyzes the 2-thiolation of uridine at the wobble position (U34) of tRNA, leading to the formation of s(2)U34. This Corynebacterium efficiens (strain DSM 44549 / YS-314 / AJ 12310 / JCM 11189 / NBRC 100395) protein is tRNA-specific 2-thiouridylase MnmA.